The chain runs to 77 residues: MPKADIHPQWYPEAKVYCNGEEVMTVGSTQPELHVDVWSGNHPFYTGTQKIIDTEGRVERFLRKYGMLEGDQAKSEA.

It belongs to the bacterial ribosomal protein bL31 family. Type A subfamily. Part of the 50S ribosomal subunit.

In terms of biological role, binds the 23S rRNA. In Synechococcus elongatus (strain ATCC 33912 / PCC 7942 / FACHB-805) (Anacystis nidulans R2), this protein is Large ribosomal subunit protein bL31.